The primary structure comprises 423 residues: Glutamyl-tRNA reductase (423 aa).

Substrate contacts are provided by residues Thr-49–Arg-52, Ser-106, Glu-111–Gln-113, and Gln-117. The active-site Nucleophile is the Cys-50. Gly-186–Ser-191 lines the NADP(+) pocket.

Belongs to the glutamyl-tRNA reductase family. As to quaternary structure, homodimer.

It carries out the reaction (S)-4-amino-5-oxopentanoate + tRNA(Glu) + NADP(+) = L-glutamyl-tRNA(Glu) + NADPH + H(+). The protein operates within porphyrin-containing compound metabolism; protoporphyrin-IX biosynthesis; 5-aminolevulinate from L-glutamyl-tRNA(Glu): step 1/2. Its function is as follows. Catalyzes the NADPH-dependent reduction of glutamyl-tRNA(Glu) to glutamate 1-semialdehyde (GSA). This is Glutamyl-tRNA reductase from Idiomarina loihiensis (strain ATCC BAA-735 / DSM 15497 / L2-TR).